A 636-amino-acid polypeptide reads, in one-letter code: Threonine--tRNA ligase (636 aa).

The 61-residue stretch at 1–61 folds into the TGS domain; it reads MLKITLKDGS…NENCEVEILS (61 aa). The interval 244–534 is catalytic; the sequence is EHRKLGKELD…LIEHYEGKFP (291 aa). Positions 335, 386, and 511 each coordinate Zn(2+).

It belongs to the class-II aminoacyl-tRNA synthetase family. In terms of assembly, homodimer. Zn(2+) serves as cofactor.

The protein localises to the cytoplasm. The enzyme catalyses tRNA(Thr) + L-threonine + ATP = L-threonyl-tRNA(Thr) + AMP + diphosphate + H(+). Functionally, catalyzes the attachment of threonine to tRNA(Thr) in a two-step reaction: L-threonine is first activated by ATP to form Thr-AMP and then transferred to the acceptor end of tRNA(Thr). Also edits incorrectly charged L-seryl-tRNA(Thr). The protein is Threonine--tRNA ligase of Natranaerobius thermophilus (strain ATCC BAA-1301 / DSM 18059 / JW/NM-WN-LF).